Consider the following 461-residue polypeptide: Photosystem II CP43 reaction center protein (461 aa).

The propeptide occupies 1–2; that stretch reads ME. An N-acetylthreonine modification is found at threonine 3. Phosphothreonine is present on threonine 3. The next 5 helical transmembrane spans lie at 57-81, 122-143, 166-188, 243-263, and 279-300; these read LFEV…PHLA, LLGP…KDRN, KALY…RKIT, KPFA…LSYS, and WFNN…ASQA. Glutamate 355 provides a ligand contact to [CaMn4O5] cluster. Residues 435–459 form a helical membrane-spanning segment; that stretch reads RARAAAAGFEKGIDRDFEPVLSMTP.

This sequence belongs to the PsbB/PsbC family. PsbC subfamily. As to quaternary structure, PSII is composed of 1 copy each of membrane proteins PsbA, PsbB, PsbC, PsbD, PsbE, PsbF, PsbH, PsbI, PsbJ, PsbK, PsbL, PsbM, PsbT, PsbX, PsbY, PsbZ, Psb30/Ycf12, at least 3 peripheral proteins of the oxygen-evolving complex and a large number of cofactors. It forms dimeric complexes. Requires Binds multiple chlorophylls and provides some of the ligands for the Ca-4Mn-5O cluster of the oxygen-evolving complex. It may also provide a ligand for a Cl- that is required for oxygen evolution. PSII binds additional chlorophylls, carotenoids and specific lipids. as cofactor.

Its subcellular location is the plastid. The protein resides in the chloroplast thylakoid membrane. Its function is as follows. One of the components of the core complex of photosystem II (PSII). It binds chlorophyll and helps catalyze the primary light-induced photochemical processes of PSII. PSII is a light-driven water:plastoquinone oxidoreductase, using light energy to abstract electrons from H(2)O, generating O(2) and a proton gradient subsequently used for ATP formation. This is Photosystem II CP43 reaction center protein from Nicotiana sylvestris (Wood tobacco).